The chain runs to 369 residues: Porin-like protein BUsg_347 (369 aa).

An N-terminal signal peptide occupies residues 1–23 (MKNHKSLAILIPMLFAGSTAVNA).

Belongs to the Gram-negative porin family. Homotrimer.

The protein resides in the cell outer membrane. Its function is as follows. Forms pores that allow passive diffusion of small molecules across the membrane. This chain is Porin-like protein BUsg_347, found in Buchnera aphidicola subsp. Schizaphis graminum (strain Sg).